The sequence spans 590 residues: Multidrug resistance-like ATP-binding protein MdlA (590 aa).

In terms of domain architecture, ABC transmembrane type-1 spans 18 to 303 (YLGAVALLVI…LAWMFNIVER (286 aa)). 6 consecutive transmembrane segments (helical) span residues 23–43 (ALLV…GIVV), 53–73 (TGQI…VYLL), 134–154 (GVLT…MMST), 155–175 (QISW…AIMI), 248–268 (IYIA…WMVV), and 280–300 (FMMY…MFNI). The region spanning 337-570 (VNIHQFTYPQ…SGWYRDMYRY (234 aa)) is the ABC transporter domain. 369-376 (GPTGSGKS) contacts ATP.

This sequence belongs to the ABC transporter superfamily. Drug exporter-2 (TC 3.A.1.117) family.

The protein resides in the cell inner membrane. The catalysed reaction is ATP + H2O + xenobioticSide 1 = ADP + phosphate + xenobioticSide 2.. The polypeptide is Multidrug resistance-like ATP-binding protein MdlA (mdlA) (Escherichia coli (strain K12)).